The following is a 33-amino-acid chain: Brevinin-2Rh (33 aa).

Cysteines 27 and 33 form a disulfide.

As to expression, expressed by the skin glands.

The protein localises to the secreted. Its function is as follows. Antimicrobial peptide. The polypeptide is Brevinin-2Rh (Pelophylax ridibundus (Marsh frog)).